The sequence spans 682 residues: DNA-directed RNA polymerase subunit beta' (682 aa).

Zn(2+)-binding residues include C69, C71, C87, and C90. Positions 489, 491, and 493 each coordinate Mg(2+).

This sequence belongs to the RNA polymerase beta' chain family. RpoC1 subfamily. In terms of assembly, in plastids the minimal PEP RNA polymerase catalytic core is composed of four subunits: alpha, beta, beta', and beta''. When a (nuclear-encoded) sigma factor is associated with the core the holoenzyme is formed, which can initiate transcription. Mg(2+) is required as a cofactor. Zn(2+) serves as cofactor.

It localises to the plastid. Its subcellular location is the chloroplast. The catalysed reaction is RNA(n) + a ribonucleoside 5'-triphosphate = RNA(n+1) + diphosphate. DNA-dependent RNA polymerase catalyzes the transcription of DNA into RNA using the four ribonucleoside triphosphates as substrates. This Platanus occidentalis (Sycamore) protein is DNA-directed RNA polymerase subunit beta'.